The following is a 211-amino-acid chain: Riboflavin kinase (211 aa).

Residues 1 to 81 (MKCIDRRLIG…DLLRYFNILS (81 aa)) form an H-T-H motif-like region. Residues 82 to 211 (IRLSGRVVSG…DRVEIEIYLE (130 aa)) are riboflavin kinase. CDP is bound at residue 91–96 (GLGEGA). Residues Thr120 and Asn122 each contribute to the Mg(2+) site. The FMN site is built by Thr177 and Glu185. Residue 190–193 (FKLR) participates in CDP binding.

Belongs to the archaeal riboflavin kinase family. The cofactor is Mg(2+).

The enzyme catalyses riboflavin + CTP = CDP + FMN + H(+). It functions in the pathway cofactor biosynthesis; FMN biosynthesis; FMN from riboflavin (CTP route): step 1/1. Catalyzes the CTP-dependent phosphorylation of riboflavin (vitamin B2) to form flavin mononucleotide (FMN). The chain is Riboflavin kinase (ribK) from Pyrobaculum islandicum (strain DSM 4184 / JCM 9189 / GEO3).